The primary structure comprises 357 residues: Peptide chain release factor 1 (357 aa).

N5-methylglutamine is present on Q234. The disordered stretch occupies residues 282 to 313; the sequence is DSKKQEQRSNNRKQQVGSGDRSERIRTYNFPQ.

The protein belongs to the prokaryotic/mitochondrial release factor family. Methylated by PrmC. Methylation increases the termination efficiency of RF1.

It localises to the cytoplasm. Peptide chain release factor 1 directs the termination of translation in response to the peptide chain termination codons UAG and UAA. The polypeptide is Peptide chain release factor 1 (Borreliella afzelii (strain PKo) (Borrelia afzelii)).